A 200-amino-acid polypeptide reads, in one-letter code: Superoxide dismutase [Fe] (200 aa).

4 residues coordinate Fe cation: H28, H80, D162, and H166.

It belongs to the iron/manganese superoxide dismutase family. In terms of assembly, homodimer. Requires Fe cation as cofactor.

The catalysed reaction is 2 superoxide + 2 H(+) = H2O2 + O2. In terms of biological role, destroys superoxide anion radicals which are normally produced within the cells and which are toxic to biological systems. The sequence is that of Superoxide dismutase [Fe] (sodB) from Nostoc sp. (strain PCC 7120 / SAG 25.82 / UTEX 2576).